We begin with the raw amino-acid sequence, 420 residues long: Transcription factor TCP4 (420 aa).

The disordered stretch occupies residues 1-27; it reads MSDDQFHHPPPPSSMRHRSTSDAADGG. Residues 45 to 103 form the TCP domain; that stretch reads RKDRHSKVCTAKGPRDRRVRLSAHTAIQFYDVQDRLGFDRPSKAVDWLIKKAKTSIDEL. Disordered stretches follow at residues 121-176, 228-256, 353-379, and 399-420; these read NAKP…PSMD, LSLQ…ASEP, HQSI…IPGI, and QEEE…ISRH. A compositionally biased stretch (polar residues) spans 410–420; it reads KPSSASSISRH.

As to quaternary structure, interacts with AHL27 and AHL29. Interacts with SPL. Interacts with JGB. Interacts with GI (via N-terminus). Expressed in cotyledons, particularly in the vascular region, in leaves, roots, buds, flowers and immature siliques.

The protein localises to the nucleus. Transcription factor playing a pivotal role in the control of morphogenesis of shoot organs by negatively regulating the expression of boundary-specific genes such as CUC genes, probably through the induction of miRNA (e.g. miR164). Required during early steps of embryogenesis. Participates in ovule development. Activates LOX2 expression by binding to the 5'-GGACCA-3' motif found in its promoter. Activates YUC5 transcription by binding to the 5'-GTGGGCCA-3' motif found in its promoter. Through the activation of YUC5 transcription, integrates the auxin response to a brassinosteroid-dependent molecular circuit that promotes cell elongation in hypocotyls. Activates GIS transcription by binding to the 5'-TGGTCC-3' motif found in its promoter. Involved in the regulation of trichome branching through the activation of GIS transcription. Activates CO transcription by binding to the 5'-GGACCAC-3' motif found in its promoter. Involved in the regulation of photoperiodic flowering through the activation of CO transcription. Activates TCL1 and TCL2 transcription by binding to the 5'-TGGCCA-3' and 5'-GTGGACCA-3' motifS found in their respective promoters. Involved in the suppression of trichome initiaition through the activation of TCL1 and TCL2 transcription. Activates HAT2 transcription by binding to the 5'-TGGTCCAC-3' motif found in its promoter. Through the activation of HAT2 transcription, involved in the auxin-independent reprogramming of mitotic cells to exit division and acquire differentiation competence within the transition zone. In Arabidopsis thaliana (Mouse-ear cress), this protein is Transcription factor TCP4 (TCP4).